The following is a 98-amino-acid chain: Large ribosomal subunit protein uL23 (98 aa).

This sequence belongs to the universal ribosomal protein uL23 family. In terms of assembly, part of the 50S ribosomal subunit. Contacts protein L29, and trigger factor when it is bound to the ribosome.

Its function is as follows. One of the early assembly proteins it binds 23S rRNA. One of the proteins that surrounds the polypeptide exit tunnel on the outside of the ribosome. Forms the main docking site for trigger factor binding to the ribosome. This chain is Large ribosomal subunit protein uL23, found in Marinomonas sp. (strain MWYL1).